The primary structure comprises 222 residues: Deoxyribose-phosphate aldolase (222 aa).

Asp-89 (proton donor/acceptor) is an active-site residue. The Schiff-base intermediate with acetaldehyde role is filled by Lys-151. Lys-180 (proton donor/acceptor) is an active-site residue.

The protein belongs to the DeoC/FbaB aldolase family. DeoC type 1 subfamily.

Its subcellular location is the cytoplasm. The catalysed reaction is 2-deoxy-D-ribose 5-phosphate = D-glyceraldehyde 3-phosphate + acetaldehyde. It functions in the pathway carbohydrate degradation; 2-deoxy-D-ribose 1-phosphate degradation; D-glyceraldehyde 3-phosphate and acetaldehyde from 2-deoxy-alpha-D-ribose 1-phosphate: step 2/2. In terms of biological role, catalyzes a reversible aldol reaction between acetaldehyde and D-glyceraldehyde 3-phosphate to generate 2-deoxy-D-ribose 5-phosphate. This is Deoxyribose-phosphate aldolase from Acholeplasma laidlawii (strain PG-8A).